Consider the following 248-residue polypeptide: MTPIFFNQQYPTLVDICARWQLVYDANATFELRFESDTLSLHKRDEPKLDGIVVDFVTGAVAHRRKFGGGRGQSIAKAVGLKQGVMPSVVDGTAGLGRDAFVLASLGCTVTMVERHPVVAALLEDGLRRAYQDAEIGDWMRERMRLFHGSSLEALSKLALEVDVVYLDPMYPHRDKSALVKKEMRVFQSLVGADLDADGLLAPALALATKRVVVKRPDYAEDLDGVKPNTVIETKKNRFDVYVKAAMK.

Residues 98 to 99 (RD), 114 to 115 (ER), 150 to 151 (SS), and D168 contribute to the S-adenosyl-L-methionine site.

This sequence belongs to the methyltransferase superfamily. RsmJ family.

It localises to the cytoplasm. The enzyme catalyses guanosine(1516) in 16S rRNA + S-adenosyl-L-methionine = N(2)-methylguanosine(1516) in 16S rRNA + S-adenosyl-L-homocysteine + H(+). Its function is as follows. Specifically methylates the guanosine in position 1516 of 16S rRNA. The polypeptide is Ribosomal RNA small subunit methyltransferase J (Shewanella baltica (strain OS223)).